Reading from the N-terminus, the 192-residue chain is MTEYLLLLISTVLVNNFVLVKFLGLCPFMGVSSKLESAIGMSMATTFVLTLASILSYLVNQYLLLPFDLSYLRTMSFILVIAVVVQFTEMVVQKTSAALHRALGIYLPLITTNCAVLGVALLNVNEKHDFIQSAIYGFGAALGFSLVLILFSAMRERLAAADVPLPFKGGAIAMITAGLMSLAFMGFTGLVK.

6 helical membrane-spanning segments follow: residues 5 to 25, 39 to 59, 65 to 85, 102 to 122, 134 to 154, and 171 to 191; these read LLLLISTVLVNNFVLVKFLGL, IGMSMATTFVLTLASILSYLV, LPFDLSYLRTMSFILVIAVVV, ALGIYLPLITTNCAVLGVALL, AIYGFGAALGFSLVLILFSAM, and AIAMITAGLMSLAFMGFTGLV.

The protein belongs to the NqrDE/RnfAE family. The complex is composed of six subunits: RnfA, RnfB, RnfC, RnfD, RnfE and RnfG.

The protein resides in the cell inner membrane. Part of a membrane-bound complex that couples electron transfer with translocation of ions across the membrane. This chain is Ion-translocating oxidoreductase complex subunit A, found in Shewanella baltica (strain OS185).